Reading from the N-terminus, the 715-residue chain is Eosinophil peroxidase (715 aa).

An N-terminal signal peptide occupies residues 1-17; sequence MHLLPALAGVLATLVLA. A propeptide spanning residues 18–139 is cleaved from the precursor; sequence QPCEGTDPAS…SGCALRDQAE (122 aa). N-linked (GlcNAc...) asparagine glycans are attached at residues Asn-52 and Asn-113. An intrachain disulfide couples Cys-141 to Cys-152. Residue Asp-232 coordinates heme b. Residue His-233 is the Proton acceptor of the active site. Residue Asp-234 coordinates Ca(2+). 2 disulfides stabilise this stretch: Cys-253–Cys-263 and Cys-257–Cys-281. Ca(2+)-binding residues include Thr-306, Phe-308, Asp-310, and Ser-312. Residues Asn-327 and Asn-363 are each glycosylated (N-linked (GlcNAc...) asparagine). A disulfide bridge connects residues Cys-359 and Cys-370. Heme b is bound by residues Glu-380 and His-474. A 3'-nitrotyrosine modification is found at Tyr-488. 2 disulfides stabilise this stretch: Cys-578–Cys-635 and Cys-676–Cys-701. Residues Asn-700 and Asn-708 are each glycosylated (N-linked (GlcNAc...) asparagine).

This sequence belongs to the peroxidase family. XPO subfamily. As to quaternary structure, tetramer of two light chains and two heavy chains. It depends on Ca(2+) as a cofactor. Heme b is required as a cofactor.

It localises to the cytoplasmic granule. It carries out the reaction 2 a phenolic donor + H2O2 = 2 a phenolic radical donor + 2 H2O. Mediates tyrosine nitration of secondary granule proteins in mature resting eosinophils. Shows significant inhibitory activity towards Mycobacterium tuberculosis H37Rv by inducing bacterial fragmentation and lysis. This chain is Eosinophil peroxidase (EPX), found in Homo sapiens (Human).